The following is a 1719-amino-acid chain: Cilia- and flagella-associated protein 43 (1719 aa).

A disordered region spans residues 94 to 120; it reads VREEGAGGGADKPSGSGAVSGKQQSSG. WD repeat units lie at residues 122–165, 174–214, 226–263, 308–345, 413–452, and 513–552; these read SVVL…GRCR, SSTS…EKAV, PAGA…PLQL, TSGA…AAAI, CHVG…LLGR, and LHSA…GRVR. Positions 569–596 are disordered; the sequence is TWPRSDGGSGAASGHAQAGPVSTTSAEG. WD repeat units follow at residues 697-736 and 749-788; these read AHAR…LAAQ and ITAG…AVAN. Positions 1022–1045 are disordered; it reads RAKQEAARKADEDAAKRSAKDNAG. Residues 1073–1114 form a WD 9 repeat; it reads PKPAWLVALGVEPDAVNPKLITEEQNRELKEWQAKEKSLQEE. 3 disordered regions span residues 1220-1269, 1277-1296, and 1325-1372; these read MPGG…AAAA, ATAA…GAAG, and TLNP…AAAA. Residues 1221–1233 show a composition bias toward gly residues; that stretch reads PGGGAIGAAGGHQ. Low complexity predominate over residues 1257 to 1269; that stretch reads ASLAHSPSGAAAA. The span at 1344 to 1358 shows a compositional bias: low complexity; it reads SSALHPSHSHASVHG. Coiled-coil stretches lie at residues 1524-1609 and 1651-1679; these read AAQW…RSAQ and HKKL…RLRT. Positions 1685–1719 are disordered; the sequence is ESGAVAGMPSPPRRLPPDIKLLAGSPSSSSVAGRT. A compositionally biased stretch (polar residues) spans 1709–1719; sequence SPSSSSVAGRT.

This sequence belongs to the CFAP43 family.

Its subcellular location is the cell projection. It localises to the cilium. The protein resides in the flagellum. It is found in the cytoplasm. The protein localises to the cytoskeleton. Its subcellular location is the flagellum axoneme. In terms of biological role, flagellar protein involved in flagellum axoneme organization and function. The polypeptide is Cilia- and flagella-associated protein 43 (Chlamydomonas reinhardtii (Chlamydomonas smithii)).